The following is a 225-amino-acid chain: NAD(P)H-quinone oxidoreductase subunit K, chloroplastic (225 aa).

[4Fe-4S] cluster-binding residues include cysteine 43, cysteine 44, cysteine 108, and cysteine 139.

It belongs to the complex I 20 kDa subunit family. In terms of assembly, NDH is composed of at least 16 different subunits, 5 of which are encoded in the nucleus. [4Fe-4S] cluster is required as a cofactor.

The protein localises to the plastid. It localises to the chloroplast thylakoid membrane. The catalysed reaction is a plastoquinone + NADH + (n+1) H(+)(in) = a plastoquinol + NAD(+) + n H(+)(out). It catalyses the reaction a plastoquinone + NADPH + (n+1) H(+)(in) = a plastoquinol + NADP(+) + n H(+)(out). Functionally, NDH shuttles electrons from NAD(P)H:plastoquinone, via FMN and iron-sulfur (Fe-S) centers, to quinones in the photosynthetic chain and possibly in a chloroplast respiratory chain. The immediate electron acceptor for the enzyme in this species is believed to be plastoquinone. Couples the redox reaction to proton translocation, and thus conserves the redox energy in a proton gradient. This is NAD(P)H-quinone oxidoreductase subunit K, chloroplastic from Oenothera argillicola (Appalachian evening primrose).